The following is a 162-amino-acid chain: NADH-quinone oxidoreductase subunit I (162 aa).

2 4Fe-4S ferredoxin-type domains span residues 53–83 (LRRY…IEAE) and 93–122 (TRYD…EGPN). Residues C63, C66, C69, C73, C102, C105, C108, and C112 each coordinate [4Fe-4S] cluster.

It belongs to the complex I 23 kDa subunit family. NDH-1 is composed of 14 different subunits. Subunits NuoA, H, J, K, L, M, N constitute the membrane sector of the complex. The cofactor is [4Fe-4S] cluster.

It is found in the cell inner membrane. It catalyses the reaction a quinone + NADH + 5 H(+)(in) = a quinol + NAD(+) + 4 H(+)(out). Functionally, NDH-1 shuttles electrons from NADH, via FMN and iron-sulfur (Fe-S) centers, to quinones in the respiratory chain. The immediate electron acceptor for the enzyme in this species is believed to be ubiquinone. Couples the redox reaction to proton translocation (for every two electrons transferred, four hydrogen ions are translocated across the cytoplasmic membrane), and thus conserves the redox energy in a proton gradient. In Rhodospirillum centenum (strain ATCC 51521 / SW), this protein is NADH-quinone oxidoreductase subunit I.